We begin with the raw amino-acid sequence, 98 residues long: Beta-elicitin DRE-beta (98 aa).

Cystine bridges form between cysteine 3/cysteine 71, cysteine 27/cysteine 56, and cysteine 51/cysteine 95.

Belongs to the elicitin family.

The protein resides in the secreted. In terms of biological role, induces local and distal defense responses (incompatible hypersensitive reaction) in plants from the solanaceae and cruciferae families. Elicits leaf necrosis and causes the accumulation of pathogenesis-related proteins. Might interact with the lipidic molecules of the plasma membrane. This chain is Beta-elicitin DRE-beta, found in Phytophthora drechsleri.